Reading from the N-terminus, the 303-residue chain is Uridylate-specific endoribonuclease C (303 aa).

The N-terminal stretch at 1–16 (MVYLVFLCLLPSLISG) is a signal peptide. One can recognise an EndoU domain in the interval 32 to 303 (TDAEIQSLAE…KRFVASSYPI (272 aa)). Residues H181, H196, and K239 contribute to the active site. The N-linked (GlcNAc...) asparagine glycan is linked to N287.

The protein belongs to the ENDOU family. In terms of assembly, monomer. Requires Mn(2+) as cofactor.

The protein localises to the secreted. It catalyses the reaction ribonucleotidyl-uridine-RNA = a 5'-end dephospho-uridine-RNA + a 3'-end 2',3'-cyclophospho-ribonucleotide-RNA. In terms of biological role, endoribonuclease that cleaves single-stranded RNAs at 5' of uridylates and releases a product with a 2',3'-cyclic phosphate at the 3'-end. The chain is Uridylate-specific endoribonuclease C (endou-c) from Xenopus laevis (African clawed frog).